The chain runs to 95 residues: uncharacterized protein (95 aa).

The interval 65–95 is disordered; the sequence is DANDYDTTTTEEEDSSTTTTTDNETNSDDDI.

This is an uncharacterized protein from Lymantria dispar multicapsid nuclear polyhedrosis virus (LdMNPV).